Consider the following 902-residue polypeptide: MKVIYIYLLLLLVCKFLFVKSSCSLKVGKIECTKELETFLLYNETVVNVKMDTNGVKYYFNALEFPYKNLLCDLNIDIKFTPEIPSFPNIPTTGGDFGFTFNFPCDYRRRVKRIEIERTILSLSFDTSKNQFVTYLNPGCGPFNISSSGIQILSTTYETGAIPNVPILDDDKGILTIQGSNLYNTSIKIYSNNILKDTNPSGALDASHSSVTFSAEEFLTPNNWTIEVSICGSFYKSYSFPYFPKLDKMEGVLNDNGGNMVFTGKHLRPKHNVTGTFGNKTIECLTSNSSKSITCTIPSRKNYGFLGYDIPVTITIDGEYKSNTIKISYDLPLIQSVSQRGNSQIFDVTGVYFSGVKNMTVITGKNMKTDIIQKKTATLEEPGFFIESNYTIFIFLPNNTQPGFMNLVVGDGGSETFTSPRYNFKITPTITAGQTFNSTTSGNDLEIKGIFMRTVDSDGRDVPLTVNSGSGGLVCNPLKDGDGLLFTCVLGPGFGSSHTMNVYYNLIPIGSFTVSYNPPYLGTSEQEKDGTIKMNGKDLGESVKDSIMTVVYSDGNTVNGTVIKSSHTSLIFRYPIGNRNTASYIFQLGDQKSNKAGPFTLKPIIENTDPAVPCGGGVVTINGHYFFNYTKDTTTITIGKVPCNISSISETTIECVIVPNLRSLSPYYTSGTKPLVISSSNPGTEKVYQLTPAGLNYKFAPPTITNTSAIDQTALITIYGTSFGDANLEILINDKPCTQPEINIHTYSSLTCNVTNYDEMKIYNYSNTKFNISISVDGQYFIADIFQFKYESGIIYSENKSTGFPNEMYLGFVVFVIFIALISFAAKNQIEKYFEERKSRKAFRSLDNLRLKLRQKHATEIAKHYTFGEQSAPKPDKSTFYDIRKKLSRLPLIRRCFKEHTD.

Residues 1 to 24 (MKVIYIYLLLLLVCKFLFVKSSCS) form the signal peptide. Over 25–803 (LKVGKIECTK…IIYSENKSTG (779 aa)) the chain is Extracellular. N-linked (GlcNAc...) asparagine glycans are attached at residues Asn43, Asn144, Asn184, Asn223, Asn272, Asn279, Asn288, Asn358, Asn389, Asn398, Asn437, Asn559, Asn628, Asn644, Asn706, Asn753, Asn764, Asn771, and Asn799. Residues 249–323 (MEGVLNDNGG…ITIDGEYKSN (75 aa)) form the IPT/TIG 1 domain. IPT/TIG domains lie at 603 to 680 (PIIE…ISSS) and 704 to 788 (ITNT…IFQF). A helical transmembrane segment spans residues 804 to 824 (FPNEMYLGFVVFVIFIALISF). Residues 825–902 (AAKNQIEKYF…IRRCFKEHTD (78 aa)) are Cytoplasmic-facing.

Its subcellular location is the cell membrane. Its function is as follows. tgrB1 and tgrC1 are involved in kin discrimination. They play an essential role in aggregation and subsequent development. This Dictyostelium discoideum (Social amoeba) protein is Tiger protein B1 (tgrB1).